A 93-amino-acid polypeptide reads, in one-letter code: Large ribosomal subunit protein uL23 (93 aa).

It belongs to the universal ribosomal protein uL23 family. Part of the 50S ribosomal subunit. Contacts protein L29, and trigger factor when it is bound to the ribosome.

One of the early assembly proteins it binds 23S rRNA. One of the proteins that surrounds the polypeptide exit tunnel on the outside of the ribosome. Forms the main docking site for trigger factor binding to the ribosome. The protein is Large ribosomal subunit protein uL23 of Wolinella succinogenes (strain ATCC 29543 / DSM 1740 / CCUG 13145 / JCM 31913 / LMG 7466 / NCTC 11488 / FDC 602W) (Vibrio succinogenes).